The chain runs to 1074 residues: MAGVLCPTEEDRSSRAALRMLPPQPCPDESGAYRRMSGPTLSQVQEEPAAEPPQPPASAAEDDVRKRGYLRKQKHGHKRYFVLRSQSHLGPARLEYYDNEKKFRSGQRSGCHPKRVIPLYLCFTVSRRADAKNKHLVALYTKDEYFAMAAENEQEQDGWYQALSELINESKGACLDTEELEENYGTLRPGTVFKEVWQVNVKPRGLGQAKNLSGVYRLCLSSKAVHLVKLNSDVACVHLLLMNIRRCGHSENYFFIEVGRSSSTGAGELWMQVDDCVVAQHMHETFLDTMKALKAYSEFRPRSKSQSSCTNPISFITTRRYLGNLPPSQTGLQRRARTESMVGTPPSAKNNSFRFRTSSEGEGTMTRPFRSVTGSLSHLNTARINLGKQEGAGRYVRAPFNSGYQSRSASLPVSHFPSATSPISVCSSSGHGSASETLTRPSSSSVCGSPSDGGFISSDEYGSSPGDLRYFRVRSNTPDSLGNTPPIQEENTLSDYMSMSTHSQPDSRDDYMEADKCFRKRTYSLTKHTNSASKQKSQTAISLGEDSEEINKQFAFAESPKLKDSSLVDDYSNGVIDSVCNQSRSKASDDGYMPMMPSNLYDSDYLPMAPKTVSAPKQINRCPSQADSKGYMMMFPINSSPVKNVFGGAATKSNLEKLSNGGYMDMSYGNSTKQIHDSNLNNNSRGLSSYFSLPRSFKSLTKQTTDQNEYVPMSSPGKLLHLGAENGVDVCKDGAVHDIAKIELKSSSSILDQQVKRPNKLTLGIRGSNTIPRMFDHSAPAEPTSPGEYINIDFSDKASSTPYSLSADGSPSSLGSSCDHRQSPLSDYMSVDIDVQSPKATAEQSNSLTDISLYACTVVSRMQPNAEYAKLPCGTACVSKTDNIMDDYTTMTFNMAMTPPRSFASETENGTKVDSPSSIVNRLCIGELTSLNSGFSLPNPLPEPIAGPKVIRADSQGRRRHSSETFASSSTVTTSSSCFTESGKRHSSASFDNVWLKPDENSCEQENKMSRHCSTGFQNGLNYISLSMHNGVCEPTSPDCHQHQNGSRNLESGGYVSIDFTRCDCLKCPTSRKD.

The tract at residues 1-64 (MAGVLCPTEE…PPASAAEDDV (64 aa)) is disordered. Short sequence motifs (YXXM motif) lie at residues 33–36 (YRRM) and 145–148 (YFAM). The 106-residue stretch at 63 to 168 (DVRKRGYLRK…WYQALSELIN (106 aa)) folds into the PH domain. In terms of domain architecture, IRS-type PTB spans 193–297 (FKEVWQVNVK…DTMKALKAYS (105 aa)). Disordered stretches follow at residues 326-370 (PPSQ…RPFR), 426-461 (CSSS…SDEY), and 475-510 (SNTP…SRDD). The span at 347 to 361 (SAKNNSFRFRTSSEG) shows a compositional bias: polar residues. Composition is skewed to low complexity over residues 426–435 (CSSSGHGSAS) and 442–454 (SSSS…SDGG). A compositionally biased stretch (polar residues) spans 475–504 (SNTPDSLGNTPPIQEENTLSDYMSMSTHSQ). Short sequence motifs (YXXM motif) lie at residues 496-499 (YMSM), 592-595 (YMPM), 605-608 (YLPM), 631-634 (YMMM), 663-666 (YMDM), and 710-713 (YVPM). A disordered region spans residues 801–821 (TPYSLSADGSPSSLGSSCDHR). Over residues 804–817 (SLSADGSPSSLGSS) the composition is skewed to low complexity. The YXXM motif 9 motif lies at 888–891 (YTTM).

Post-translationally, phosphorylated by INSR.

In terms of biological role, potentiates insulin signaling. This chain is Insulin receptor substrate 2-A (irs2-a), found in Xenopus laevis (African clawed frog).